The following is a 95-amino-acid chain: Small ribosomal subunit protein uS19 (95 aa).

This sequence belongs to the universal ribosomal protein uS19 family.

Protein S19 forms a complex with S13 that binds strongly to the 16S ribosomal RNA. The sequence is that of Small ribosomal subunit protein uS19 from Thermosipho africanus (strain TCF52B).